Here is a 325-residue protein sequence, read N- to C-terminus: Probable arylamine N-acetyltransferase 1 (325 aa).

C72 functions as the Acyl-thioester intermediate in the catalytic mechanism. Active-site residues include H112 and D127.

This sequence belongs to the arylamine N-acetyltransferase family.

It catalyses the reaction an arylamine + acetyl-CoA = an N-acetylarylamine + CoA. This Dictyostelium discoideum (Social amoeba) protein is Probable arylamine N-acetyltransferase 1.